A 376-amino-acid chain; its full sequence is Chaperone protein DnaJ (376 aa).

One can recognise a J domain in the interval 5-70 (DYYEVLGAAK…QKRAAYDQFG (66 aa)). The CR-type zinc-finger motif lies at 134–212 (GCDEKIRIPT…CGGQGRVQNT (79 aa)). Positions 147, 150, 164, 167, 186, 189, 200, and 203 each coordinate Zn(2+). CXXCXGXG motif repeat units lie at residues 147-154 (CDVCHGSG), 164-171 (CTTCGGVG), 186-193 (CPTCKGEG), and 200-207 (CGNCGGQG).

It belongs to the DnaJ family. As to quaternary structure, homodimer. The cofactor is Zn(2+).

Its subcellular location is the cytoplasm. In terms of biological role, participates actively in the response to hyperosmotic and heat shock by preventing the aggregation of stress-denatured proteins and by disaggregating proteins, also in an autonomous, DnaK-independent fashion. Unfolded proteins bind initially to DnaJ; upon interaction with the DnaJ-bound protein, DnaK hydrolyzes its bound ATP, resulting in the formation of a stable complex. GrpE releases ADP from DnaK; ATP binding to DnaK triggers the release of the substrate protein, thus completing the reaction cycle. Several rounds of ATP-dependent interactions between DnaJ, DnaK and GrpE are required for fully efficient folding. Also involved, together with DnaK and GrpE, in the DNA replication of plasmids through activation of initiation proteins. This Alcanivorax borkumensis (strain ATCC 700651 / DSM 11573 / NCIMB 13689 / SK2) protein is Chaperone protein DnaJ.